Reading from the N-terminus, the 261-residue chain is Urease accessory protein UreD (261 aa).

Belongs to the UreD family. As to quaternary structure, ureD, UreF and UreG form a complex that acts as a GTP-hydrolysis-dependent molecular chaperone, activating the urease apoprotein by helping to assemble the nickel containing metallocenter of UreC. The UreE protein probably delivers the nickel.

The protein resides in the cytoplasm. Functionally, required for maturation of urease via the functional incorporation of the urease nickel metallocenter. This is Urease accessory protein UreD from Haemophilus influenzae (strain ATCC 51907 / DSM 11121 / KW20 / Rd).